The following is a 175-amino-acid chain: ATP synthase subunit b (175 aa).

A helical transmembrane segment spans residues 18–38; sequence VTSWEPFVANLIAFILMVVIL.

Belongs to the ATPase B chain family. As to quaternary structure, F-type ATPases have 2 components, F(1) - the catalytic core - and F(0) - the membrane proton channel. F(1) has five subunits: alpha(3), beta(3), gamma(1), delta(1), epsilon(1). F(0) has three main subunits: a(1), b(2) and c(10-14). The alpha and beta chains form an alternating ring which encloses part of the gamma chain. F(1) is attached to F(0) by a central stalk formed by the gamma and epsilon chains, while a peripheral stalk is formed by the delta and b chains.

The protein localises to the cell inner membrane. Its function is as follows. F(1)F(0) ATP synthase produces ATP from ADP in the presence of a proton or sodium gradient. F-type ATPases consist of two structural domains, F(1) containing the extramembraneous catalytic core and F(0) containing the membrane proton channel, linked together by a central stalk and a peripheral stalk. During catalysis, ATP synthesis in the catalytic domain of F(1) is coupled via a rotary mechanism of the central stalk subunits to proton translocation. Functionally, component of the F(0) channel, it forms part of the peripheral stalk, linking F(1) to F(0). This chain is ATP synthase subunit b, found in Akkermansia muciniphila (strain ATCC BAA-835 / DSM 22959 / JCM 33894 / BCRC 81048 / CCUG 64013 / CIP 107961 / Muc).